The chain runs to 123 residues: Large ribosomal subunit protein bL12 (123 aa).

Belongs to the bacterial ribosomal protein bL12 family. Homodimer. Part of the ribosomal stalk of the 50S ribosomal subunit. Forms a multimeric L10(L12)X complex, where L10 forms an elongated spine to which 2 to 4 L12 dimers bind in a sequential fashion. Binds GTP-bound translation factors.

Its function is as follows. Forms part of the ribosomal stalk which helps the ribosome interact with GTP-bound translation factors. Is thus essential for accurate translation. This chain is Large ribosomal subunit protein bL12, found in Bartonella henselae (strain ATCC 49882 / DSM 28221 / CCUG 30454 / Houston 1) (Rochalimaea henselae).